The chain runs to 925 residues: Bifunctional uridylyltransferase/uridylyl-removing enzyme (925 aa).

The segment at 1-382 (MVLPTTKDAT…PPGAEVRRVP (382 aa)) is uridylyltransferase. Positions 383 to 738 (DSDDFIIDNN…VGFDEARGVT (356 aa)) are uridylyl-removing. The 124-residue stretch at 498 to 621 (VDEHLIRCIG…VQSVERMKLL (124 aa)) folds into the HD domain. ACT domains follow at residues 739–820 (ELTI…DVMP) and 849–925 (MIEV…NTAE).

This sequence belongs to the GlnD family. It depends on Mg(2+) as a cofactor.

It carries out the reaction [protein-PII]-L-tyrosine + UTP = [protein-PII]-uridylyl-L-tyrosine + diphosphate. The catalysed reaction is [protein-PII]-uridylyl-L-tyrosine + H2O = [protein-PII]-L-tyrosine + UMP + H(+). With respect to regulation, uridylyltransferase (UTase) activity is inhibited by glutamine, while glutamine activates uridylyl-removing (UR) activity. In terms of biological role, modifies, by uridylylation and deuridylylation, the PII regulatory proteins (GlnB and homologs), in response to the nitrogen status of the cell that GlnD senses through the glutamine level. Under low glutamine levels, catalyzes the conversion of the PII proteins and UTP to PII-UMP and PPi, while under higher glutamine levels, GlnD hydrolyzes PII-UMP to PII and UMP (deuridylylation). Thus, controls uridylylation state and activity of the PII proteins, and plays an important role in the regulation of nitrogen assimilation and metabolism. The sequence is that of Bifunctional uridylyltransferase/uridylyl-removing enzyme from Nitrobacter winogradskyi (strain ATCC 25391 / DSM 10237 / CIP 104748 / NCIMB 11846 / Nb-255).